Here is a 325-residue protein sequence, read N- to C-terminus: Alpha-cuprenene synthase COP6 (325 aa).

Residues Asp102, Glu166, Asn224, Ser228, and Glu232 each contribute to the Mg(2+) site.

This sequence belongs to the trichodiene synthase family. The cofactor is Mg(2+).

Alpha-cuprenene synthase; part of the gene cluster that mediates the biosynthesis of alpha-cuprenene and oxidized derivatives. The alpha-cuprenene synthase COP6 is the only sesquiterpene synthase identified in C.cinereus that appears to be part of a biosynthetic gene cluster and is highly specific since it catalyzes the cyclization of (2E,6E)-farnesyl diphosphate into only one product, alpha-cuprenene. COP6 is also able to perform the cyclization of geranyl diphosphate. The cytochrome P450 monooxygenase COX2 then oxidizes the cyclohexadiene ring of alpha-cuprenene at positions 1 and 4, yielding first alpha-cuparene, followed by alpha-cuparophenol and a further yet unidentified compound resulting from one additional oxidation step. The cytochrome P450 monooxygenase COX1 then likely catalyzes the oxidation at position 9 of the pentane ring of alpha-cuprenene to give the corresponding hydroxy or ketone derivatives. The protein is Alpha-cuprenene synthase COP6 of Coprinopsis cinerea (strain Okayama-7 / 130 / ATCC MYA-4618 / FGSC 9003) (Inky cap fungus).